The following is a 359-amino-acid chain: 3-dehydroquinate synthase (359 aa).

NAD(+)-binding positions include 71 to 76 (DGEAYK), 105 to 109 (GVVGD), 129 to 130 (TT), Lys-142, and Lys-151. Residues Glu-184, His-247, and His-264 each coordinate Zn(2+).

It belongs to the sugar phosphate cyclases superfamily. Dehydroquinate synthase family. Requires Co(2+) as cofactor. The cofactor is Zn(2+). It depends on NAD(+) as a cofactor.

Its subcellular location is the cytoplasm. It catalyses the reaction 7-phospho-2-dehydro-3-deoxy-D-arabino-heptonate = 3-dehydroquinate + phosphate. It functions in the pathway metabolic intermediate biosynthesis; chorismate biosynthesis; chorismate from D-erythrose 4-phosphate and phosphoenolpyruvate: step 2/7. Catalyzes the conversion of 3-deoxy-D-arabino-heptulosonate 7-phosphate (DAHP) to dehydroquinate (DHQ). In Burkholderia cenocepacia (strain ATCC BAA-245 / DSM 16553 / LMG 16656 / NCTC 13227 / J2315 / CF5610) (Burkholderia cepacia (strain J2315)), this protein is 3-dehydroquinate synthase.